We begin with the raw amino-acid sequence, 190 residues long: dCTP deaminase, dUMP-forming (190 aa).

Residues 101–106 (KSSLGR), aspartate 119, 127–129 (TLE), glutamine 148, tyrosine 162, and glutamine 174 contribute to the dCTP site. Glutamate 129 functions as the Proton donor/acceptor in the catalytic mechanism. The tract at residues 161–190 (PYGSSGVGSKYQGQRGPTPSRSYQNFIRST) is disordered. Polar residues predominate over residues 171-190 (YQGQRGPTPSRSYQNFIRST).

It belongs to the dCTP deaminase family. Homotrimer.

It carries out the reaction dCTP + 2 H2O = dUMP + NH4(+) + diphosphate. It participates in pyrimidine metabolism; dUMP biosynthesis; dUMP from dCTP: step 1/1. In terms of biological role, bifunctional enzyme that catalyzes both the deamination of dCTP to dUTP and the hydrolysis of dUTP to dUMP without releasing the toxic dUTP intermediate. The sequence is that of dCTP deaminase, dUMP-forming from Mycobacterium ulcerans (strain Agy99).